Reading from the N-terminus, the 100-residue chain is Small ribosomal subunit protein uS14c (100 aa).

It belongs to the universal ribosomal protein uS14 family. Part of the 30S ribosomal subunit.

Its subcellular location is the plastid. The protein localises to the chloroplast. In terms of biological role, binds 16S rRNA, required for the assembly of 30S particles. This is Small ribosomal subunit protein uS14c from Pleurastrum terricola (Filamentous green alga).